The following is a 274-amino-acid chain: MPIVKAKPTSAGRRFVVQVTSLELYKGRPHPALTKKLSKSGGRNNQGRITVRHCGGGHKRLYRIIDFRRDKIDVLGRVKRIEYDPNRSAHIALINYSDGEKRYIIAPKAVKVGDIITSGREAPIRDGNCLPLRNIPVGTLVHCIELKPGKGAQIARSAGSSCQLVAREGDHAMLRLRSGEIRKVPLECRATIGEVGNDGHGLRSLGKAGAMRWRGKRPTVRGVAMNPVDHPHGGGEGRTSGGRHPVSPWGVPTKGYKTRRNKRTGKFIVRRRKK.

The tract at residues 222 to 257 (GVAMNPVDHPHGGGEGRTSGGRHPVSPWGVPTKGYK) is disordered.

Belongs to the universal ribosomal protein uL2 family. In terms of assembly, part of the 50S ribosomal subunit. Forms a bridge to the 30S subunit in the 70S ribosome.

In terms of biological role, one of the primary rRNA binding proteins. Required for association of the 30S and 50S subunits to form the 70S ribosome, for tRNA binding and peptide bond formation. It has been suggested to have peptidyltransferase activity; this is somewhat controversial. Makes several contacts with the 16S rRNA in the 70S ribosome. This Nitrosococcus oceani (strain ATCC 19707 / BCRC 17464 / JCM 30415 / NCIMB 11848 / C-107) protein is Large ribosomal subunit protein uL2.